A 1459-amino-acid polypeptide reads, in one-letter code: DNA-binding protein RFX7 (1459 aa).

Residues 1–27 (MAEEQQQPPPQQLDAPQQLPLSAPNPG) are disordered. Residues 12–21 (QLDAPQQLPL) are compositionally biased toward low complexity. A DNA-binding region (RFX-type winged-helix) is located at residues 108 to 183 (AFSWIRNTLE…YCYSGLRKKA (76 aa)). The short motif at 188–193 (PTLPNL) is the PxLPxI/L motif; mediates interaction with ANKRA2 and RFXANK element. Disordered stretches follow at residues 303-347 (AKQQ…LPNG), 404-428 (SVKQ…ARHR), 482-590 (PSNS…GVTE), 634-659 (FTST…SPRK), 688-716 (GQKP…AQIP), and 918-1016 (SVTP…VPPS). Composition is skewed to polar residues over residues 404 to 416 (SVKQ…QNVP) and 482 to 502 (PSNS…TGTT). The span at 521 to 534 (SPGSRASSTGGTSA) shows a compositional bias: low complexity. Residues 537–549 (VKMEPEGSSDEHP) are compositionally biased toward basic and acidic residues. Composition is skewed to polar residues over residues 562 to 578 (PLTT…NTDG), 634 to 645 (FTSTSSPSNGDS), and 706 to 716 (TESSTAGAQIP). Residues 947–963 (TPTPTPTPTPTPTPTPT) are compositionally biased toward pro residues. Positions 971–1009 (GSQSLSRESPCSRLAQTTPVDSALGSSRHTPIGTPHSNC) are enriched in polar residues.

This sequence belongs to the RFX family. Interacts (via PxLPxI/L motif) with RFXANK (via ankyrin repeats). Interacts (via PxLPxI/L motif) with ANKRA2 (via ankyrin repeats). Expressed in spleen and lymph node and to a lower extend in brain (at protein level). Expressed in lymphoid organs and lymphoid cell subsets. Expressed throughout natural killer (NK) cell maturation.

Its subcellular location is the nucleus. Functionally, transcription factor. Acts as a transcriptional activator by binding to promoter regions of target genes, such as Rec8, Mxd4 and Ddit4. Plays a role in natural killer (NK) cell maintenance and immunity. May play a role in the process of ciliogenesis in the neural tube and neural tube closure. The polypeptide is DNA-binding protein RFX7 (Mus musculus (Mouse)).